The chain runs to 475 residues: Sulfate adenylyltransferase subunit 1 (475 aa).

The region spanning 25 to 239 (KSLLRFLTCG…EVLETVEIQR (215 aa)) is the tr-type G domain. A G1 region spans residues 34 to 41 (GSVDDGKS). GTP is bound at residue 34–41 (GSVDDGKS). The segment at 92–96 (GITID) is G2. The tract at residues 113–116 (DTPG) is G3. GTP contacts are provided by residues 113–117 (DTPGH) and 168–171 (NKMD). Residues 168-171 (NKMD) are G4. Residues 206–208 (SAL) are G5.

It belongs to the TRAFAC class translation factor GTPase superfamily. Classic translation factor GTPase family. CysN/NodQ subfamily. Heterodimer composed of CysD, the smaller subunit, and CysN.

The enzyme catalyses sulfate + ATP + H(+) = adenosine 5'-phosphosulfate + diphosphate. It functions in the pathway sulfur metabolism; hydrogen sulfide biosynthesis; sulfite from sulfate: step 1/3. Its function is as follows. With CysD forms the ATP sulfurylase (ATPS) that catalyzes the adenylation of sulfate producing adenosine 5'-phosphosulfate (APS) and diphosphate, the first enzymatic step in sulfur assimilation pathway. APS synthesis involves the formation of a high-energy phosphoric-sulfuric acid anhydride bond driven by GTP hydrolysis by CysN coupled to ATP hydrolysis by CysD. This chain is Sulfate adenylyltransferase subunit 1, found in Escherichia coli (strain SE11).